A 536-amino-acid chain; its full sequence is Phosphoenolpyruvate carboxykinase (ATP) (536 aa).

Substrate is bound by residues Arg61, Tyr195, and Lys201. ATP contacts are provided by residues Lys201, His220, and 236–244 (GLSGTGKTT). Residues Lys201 and His220 each contribute to the Mn(2+) site. Asp257 contributes to the Mn(2+) binding site. ATP contacts are provided by Glu285, Arg322, and Thr447. Arg322 serves as a coordination point for substrate.

It belongs to the phosphoenolpyruvate carboxykinase (ATP) family. The cofactor is Mn(2+).

The protein resides in the cytoplasm. It carries out the reaction oxaloacetate + ATP = phosphoenolpyruvate + ADP + CO2. It functions in the pathway carbohydrate biosynthesis; gluconeogenesis. Its function is as follows. Involved in the gluconeogenesis. Catalyzes the conversion of oxaloacetate (OAA) to phosphoenolpyruvate (PEP) through direct phosphoryl transfer between the nucleoside triphosphate and OAA. The sequence is that of Phosphoenolpyruvate carboxykinase (ATP) from Sinorhizobium medicae (strain WSM419) (Ensifer medicae).